Consider the following 462-residue polypeptide: ATP synthase subunit beta (462 aa).

151–158 provides a ligand contact to ATP; sequence GGAGVGKT.

This sequence belongs to the ATPase alpha/beta chains family. In terms of assembly, F-type ATPases have 2 components, CF(1) - the catalytic core - and CF(0) - the membrane proton channel. CF(1) has five subunits: alpha(3), beta(3), gamma(1), delta(1), epsilon(1). CF(0) has four main subunits: a(1), b(1), b'(1) and c(9-12).

The protein localises to the cell inner membrane. The catalysed reaction is ATP + H2O + 4 H(+)(in) = ADP + phosphate + 5 H(+)(out). Functionally, produces ATP from ADP in the presence of a proton gradient across the membrane. The catalytic sites are hosted primarily by the beta subunits. The chain is ATP synthase subunit beta from Pelodictyon phaeoclathratiforme (strain DSM 5477 / BU-1).